The following is a 285-amino-acid chain: Trypsin Tyr p 3.0101 (285 aa).

A signal peptide spans 1-16 (MKILLFLCFLVSVAFA). Positions 17–33 (KPPTIQLKSNTKSQNGF) are excised as a propeptide. One can recognise a Peptidase S1 domain in the interval 34–262 (IVGGTEAVDG…YLDWIELSAK (229 aa)). Residues cysteine 58 and cysteine 74 are joined by a disulfide bond. Catalysis depends on charge relay system residues histidine 73 and aspartate 120. 2 disulfides stabilise this stretch: cysteine 186/cysteine 202 and cysteine 214/cysteine 238. Residue serine 218 is the Charge relay system of the active site.

This sequence belongs to the peptidase S1 family.

It is found in the secreted. It catalyses the reaction Preferential cleavage: Arg-|-Xaa, Lys-|-Xaa.. Its activity is regulated as follows. Inhibited by the serine protease inhibitor phenylmethylsulfonyl, and trypsin inhibitors soybean trypsin inhibitor and tosyllysine chloromethyl ketone. Not inhibited by dithiothreitol, a cysteine protease inhibitor. Digests TAMe (p-toluene arginine methyl ester), but not ethyl N-benzoyl-L-tyrosinate (BTEE). This is Trypsin Tyr p 3.0101 from Tyrophagus putrescentiae (Mold mite).